Here is a 135-residue protein sequence, read N- to C-terminus: Transcription antitermination protein NusB (135 aa).

It belongs to the NusB family.

In terms of biological role, involved in transcription antitermination. Required for transcription of ribosomal RNA (rRNA) genes. Binds specifically to the boxA antiterminator sequence of the ribosomal RNA (rrn) operons. This Lacticaseibacillus casei (strain BL23) (Lactobacillus casei) protein is Transcription antitermination protein NusB.